The chain runs to 416 residues: Phosphatidylserine decarboxylase proenzyme, mitochondrial (416 aa).

Residues 1–67 (MPGKSTRPLP…GRLHFPQLAL (67 aa)) lie on the Mitochondrial matrix side of the membrane. A helical membrane pass occupies residues 68 to 86 (RRRLGQLSCMSKPALKLRS). Residues 87–416 (WPLTVLYYLL…IRFGEALGSL (330 aa)) lie on the Mitochondrial intermembrane side of the membrane. Active-site charge relay system; for autoendoproteolytic cleavage activity residues include aspartate 198, histidine 274, and serine 385. Catalysis depends on serine 385, which acts as the Schiff-base intermediate with substrate; via pyruvic acid; for decarboxylase activity. The residue at position 385 (serine 385) is a Pyruvic acid (Ser); by autocatalysis.

Belongs to the phosphatidylserine decarboxylase family. PSD-B subfamily. Eukaryotic type I sub-subfamily. As to quaternary structure, heterodimer of a large membrane-associated beta subunit and a small pyruvoyl-containing alpha subunit. The cofactor is pyruvate. Is synthesized initially as an inactive proenzyme. Formation of the active enzyme involves a self-maturation process in which the active site pyruvoyl group is generated from an internal serine residue via an autocatalytic post-translational modification. Two non-identical subunits are generated from the proenzyme in this reaction, and the pyruvate is formed at the N-terminus of the alpha chain, which is derived from the carboxyl end of the proenzyme. The autoendoproteolytic cleavage occurs by a canonical serine protease mechanism, in which the side chain hydroxyl group of the serine supplies its oxygen atom to form the C-terminus of the beta chain, while the remainder of the serine residue undergoes an oxidative deamination to produce ammonia and the pyruvoyl prosthetic group on the alpha chain. During this reaction, the Ser that is part of the protease active site of the proenzyme becomes the pyruvoyl prosthetic group, which constitutes an essential element of the active site of the mature decarboxylase.

The protein localises to the mitochondrion inner membrane. The protein resides in the cytoplasm. It is found in the lipid droplet. The enzyme catalyses a 1,2-diacyl-sn-glycero-3-phospho-L-serine + H(+) = a 1,2-diacyl-sn-glycero-3-phosphoethanolamine + CO2. It functions in the pathway phospholipid metabolism; phosphatidylethanolamine biosynthesis. Catalyzes the formation of phosphatidylethanolamine (PtdEtn) from phosphatidylserine (PtdSer). Plays a central role in phospholipid metabolism and in the interorganelle trafficking of phosphatidylserine. May be involved in lipid droplet biogenesis at the endoplasmic reticulum membrane. The protein is Phosphatidylserine decarboxylase proenzyme, mitochondrial of Bos taurus (Bovine).